A 352-amino-acid polypeptide reads, in one-letter code: N-acetyl-gamma-glutamyl-phosphate reductase (352 aa).

Cysteine 155 is an active-site residue.

This sequence belongs to the NAGSA dehydrogenase family. Type 1 subfamily.

The protein localises to the cytoplasm. The enzyme catalyses N-acetyl-L-glutamate 5-semialdehyde + phosphate + NADP(+) = N-acetyl-L-glutamyl 5-phosphate + NADPH + H(+). It participates in amino-acid biosynthesis; L-arginine biosynthesis; N(2)-acetyl-L-ornithine from L-glutamate: step 3/4. Catalyzes the NADPH-dependent reduction of N-acetyl-5-glutamyl phosphate to yield N-acetyl-L-glutamate 5-semialdehyde. The chain is N-acetyl-gamma-glutamyl-phosphate reductase from Rippkaea orientalis (strain PCC 8801 / RF-1) (Cyanothece sp. (strain PCC 8801)).